The primary structure comprises 564 residues: NAD-dependent malic enzyme (564 aa).

Catalysis depends on tyrosine 104, which acts as the Proton donor. Arginine 157 lines the NAD(+) pocket. Lysine 175 acts as the Proton acceptor in catalysis. A divalent metal cation-binding residues include glutamate 246, aspartate 247, and aspartate 270. Aspartate 270 and asparagine 417 together coordinate NAD(+).

It belongs to the malic enzymes family. Homotetramer. Mg(2+) is required as a cofactor. It depends on Mn(2+) as a cofactor.

It carries out the reaction (S)-malate + NAD(+) = pyruvate + CO2 + NADH. It catalyses the reaction oxaloacetate + H(+) = pyruvate + CO2. This chain is NAD-dependent malic enzyme, found in Aeromonas hydrophila subsp. hydrophila (strain ATCC 7966 / DSM 30187 / BCRC 13018 / CCUG 14551 / JCM 1027 / KCTC 2358 / NCIMB 9240 / NCTC 8049).